A 94-amino-acid polypeptide reads, in one-letter code: Large ribosomal subunit protein uL29 (94 aa).

A disordered region spans residues 66 to 94; sequence NPGERKSRVLSRAKRKKKNLARLSAKVKG. Over residues 73 to 94 the composition is skewed to basic residues; it reads RVLSRAKRKKKNLARLSAKVKG.

The protein belongs to the universal ribosomal protein uL29 family.

The polypeptide is Large ribosomal subunit protein uL29 (Leptospira borgpetersenii serovar Hardjo-bovis (strain JB197)).